A 200-amino-acid chain; its full sequence is MIDPVLEYRLSQIQSRINEDRFLKNNGSGNEIGFWIFDYPAQCELQVREHLKYLLRHLEKDHKFACLNVFQIIIDMLNERGLFERVCQQEVKVGTETLKKQLAGPLNQKKIADFIAKKVDLAAQDFVILTGMGNAWPLVRGHELMSALQDVMGFTPLLMFYPGTYSGYNLSPLTDTGSQNYYRAFRLVPDTGPAATLNPQ.

The protein belongs to the BrxB family.

In terms of biological role, BREX systems (bacteriophage exclusion) provide immunity against bacteriophage. Part of a type 1 BREX system which protects against dsDNA phage. This system allows phage adsorption but prevents phage DNA replication, without degradation of the phage DNA. Methylation of bacterial DNA by PglX guides self/non-self discrimination. When the brxA-brxB-brxC-pglX-pglZ-brxL genes are transformed into a susceptible E.coli strain (BW25113) they confer very high resistance to infection by bacteriophage VR7 and VpaE1, about 100-fold protection against lambda, T5 and T7 and no protection against RNA phage Qbeta, ssDNA phage M13 or dSDNA phage T4 and VR5. Glycosylated phage DNA is not susceptible to BREX. The BREX system does not confer resistance to lysogenic lambda phage, i.e. prophage that are integrated into the chromosomal DNA and then induced to form phage. The protein is BREX protein BrxB of Escherichia coli O9:H4 (strain HS).